The following is a 164-amino-acid chain: Peptidyl-prolyl cis-trans isomerase A (164 aa).

Methionine 1 is subject to N-acetylmethionine. Position 2 is an N-acetylvaline; in Peptidyl-prolyl cis-trans isomerase A, N-terminally processed (valine 2). The PPIase cyclophilin-type domain maps to 7–163; sequence FFDIAVDGEP…KKITIADCGQ (157 aa). The residue at position 28 (lysine 28) is an N6-acetyllysine; alternate. Residue lysine 28 forms a Glycyl lysine isopeptide (Lys-Gly) (interchain with G-Cter in SUMO2); alternate linkage. Lysine 28 participates in a covalent cross-link: Glycyl lysine isopeptide (Lys-Gly) (interchain with G-Cter in ubiquitin); alternate. Lysine 44 and lysine 76 each carry N6-acetyllysine. Residues cysteine 62 and cysteine 161 are joined by a disulfide bond. A Phosphoserine modification is found at serine 77. Lysine 82 carries the N6-acetyllysine; alternate modification. A Glycyl lysine isopeptide (Lys-Gly) (interchain with G-Cter in SUMO2); alternate cross-link involves residue lysine 82. Position 93 is a phosphothreonine (threonine 93). Residue asparagine 108 is glycosylated (N-linked (GlcNAc...) asparagine). 3 positions are modified to N6-acetyllysine: lysine 125, lysine 131, and lysine 133.

Belongs to the cyclophilin-type PPIase family. PPIase A subfamily. In terms of assembly, interacts with protein phosphatase PPP3CA/calcineurin A. Interacts with isoform 2 of BSG/CD147. Interacts with FOXO1; the interaction promotes FOXO1 dephosphorylation, nuclear accumulation and transcriptional activity. Interacts with integrin ITGA2B:ITGB3; the interaction is ROS and peptidyl-prolyl cis-trans isomerase (PPIase) activity-dependent and is increased in the presence of thrombin. Interacts with MAP3K5. Interacts with TARDBP; the interaction is dependent on the RNA-binding activity of TARDBP and the PPIase activity of PPIA/CYPA and the acetylation of PPIA/CYPA at Lys-125 favors the interaction. Interacts with HNRNPA1, HNRNPA2B1, HNRNPC, RBMX, HNRNPK and HNRNPM. Acetylation at Lys-125 markedly inhibits catalysis of cis to trans isomerization. PPIA acetylation also antagonizes the immunosuppressive effects of cyclosporine by inhibiting the sequential steps of cyclosporine binding and calcineurin inhibition. Acetylation at Lys-125 favors the interaction with TARDBP.

It localises to the cytoplasm. Its subcellular location is the secreted. The protein resides in the nucleus. The enzyme catalyses [protein]-peptidylproline (omega=180) = [protein]-peptidylproline (omega=0). Its activity is regulated as follows. Binds cyclosporin A (CsA). CsA mediates some of its effects via an inhibitory action on PPIase. Catalyzes the cis-trans isomerization of proline imidic peptide bonds in oligopeptides. Exerts a strong chemotactic effect on leukocytes partly through activation of one of its membrane receptors BSG/CD147, initiating a signaling cascade that culminates in MAPK/ERK activation. Activates endothelial cells (ECs) in a proinflammatory manner by stimulating activation of NF-kappa-B and ERK, JNK and p38 MAP-kinases and by inducing expression of adhesion molecules including SELE and VCAM1. Induces apoptosis in ECs by promoting the FOXO1-dependent expression of CCL2 and BCL2L11 which are involved in EC chemotaxis and apoptosis. In response to oxidative stress, initiates proapoptotic and antiapoptotic signaling in ECs via activation of NF-kappa-B and AKT1 and up-regulation of antiapoptotic protein BCL2. Negatively regulates MAP3K5/ASK1 kinase activity, autophosphorylation and oxidative stress-induced apoptosis mediated by MAP3K5/ASK1. Necessary for the assembly of TARDBP in heterogeneous nuclear ribonucleoprotein (hnRNP) complexes and regulates TARDBP binding to RNA UG repeats and TARDBP-dependent expression of HDAC6, ATG7 and VCP which are involved in clearance of protein aggregates. Plays an important role in platelet activation and aggregation. Regulates calcium mobilization and integrin ITGA2B:ITGB3 bidirectional signaling via increased ROS production as well as by facilitating the interaction between integrin and the cell cytoskeleton. Binds heparan sulfate glycosaminoglycans. The sequence is that of Peptidyl-prolyl cis-trans isomerase A (PPIA) from Bos taurus (Bovine).